The following is a 309-amino-acid chain: Homoserine kinase (309 aa).

91–101 (PIGSGLGSSAC) contributes to the ATP binding site.

It belongs to the GHMP kinase family. Homoserine kinase subfamily.

It is found in the cytoplasm. The enzyme catalyses L-homoserine + ATP = O-phospho-L-homoserine + ADP + H(+). It participates in amino-acid biosynthesis; L-threonine biosynthesis; L-threonine from L-aspartate: step 4/5. Functionally, catalyzes the ATP-dependent phosphorylation of L-homoserine to L-homoserine phosphate. The polypeptide is Homoserine kinase (Citrobacter koseri (strain ATCC BAA-895 / CDC 4225-83 / SGSC4696)).